Reading from the N-terminus, the 261-residue chain is uncharacterized protein (261 aa).

The protein belongs to the FwdC/FmdC family.

This is an uncharacterized protein from Methanocaldococcus jannaschii (strain ATCC 43067 / DSM 2661 / JAL-1 / JCM 10045 / NBRC 100440) (Methanococcus jannaschii).